The primary structure comprises 338 residues: DNA-directed RNA polymerase subunit alpha (338 aa).

The segment at 1-234 (MIQKNWQELI…DQLQLFINFE (234 aa)) is alpha N-terminal domain (alpha-NTD). The tract at residues 250 to 338 (FNKNLLRKVD…ELAKKLEEPY (89 aa)) is alpha C-terminal domain (alpha-CTD).

This sequence belongs to the RNA polymerase alpha chain family. Homodimer. The RNAP catalytic core consists of 2 alpha, 1 beta, 1 beta' and 1 omega subunit. When a sigma factor is associated with the core the holoenzyme is formed, which can initiate transcription.

The catalysed reaction is RNA(n) + a ribonucleoside 5'-triphosphate = RNA(n+1) + diphosphate. Functionally, DNA-dependent RNA polymerase catalyzes the transcription of DNA into RNA using the four ribonucleoside triphosphates as substrates. This Paramagnetospirillum magneticum (strain ATCC 700264 / AMB-1) (Magnetospirillum magneticum) protein is DNA-directed RNA polymerase subunit alpha.